The chain runs to 343 residues: S-adenosylmethionine:tRNA ribosyltransferase-isomerase (343 aa).

This sequence belongs to the QueA family. In terms of assembly, monomer.

It localises to the cytoplasm. The catalysed reaction is 7-aminomethyl-7-carbaguanosine(34) in tRNA + S-adenosyl-L-methionine = epoxyqueuosine(34) in tRNA + adenine + L-methionine + 2 H(+). The protein operates within tRNA modification; tRNA-queuosine biosynthesis. In terms of biological role, transfers and isomerizes the ribose moiety from AdoMet to the 7-aminomethyl group of 7-deazaguanine (preQ1-tRNA) to give epoxyqueuosine (oQ-tRNA). This Dehalococcoides mccartyi (strain CBDB1) protein is S-adenosylmethionine:tRNA ribosyltransferase-isomerase.